Reading from the N-terminus, the 334-residue chain is Sensor protein BceS (334 aa).

2 consecutive transmembrane segments (helical) span residues 13–33 and 35–55; these read ILII…DSAI and LAPV…FLAV. Residues 121–326 enclose the Histidine kinase domain; sequence AWIHEIKTPL…TFTLTFPKEN (206 aa). The residue at position 124 (His124) is a Phosphohistidine; by autocatalysis.

The protein localises to the cell membrane. It catalyses the reaction ATP + protein L-histidine = ADP + protein N-phospho-L-histidine.. In terms of biological role, member of the two-component regulatory system BceS/BceR involved in the regulation of bacitracin resistance. Activates BceR in response to extracellular bacitracin. This chain is Sensor protein BceS (bceS), found in Halalkalibacterium halodurans (strain ATCC BAA-125 / DSM 18197 / FERM 7344 / JCM 9153 / C-125) (Bacillus halodurans).